Here is a 473-residue protein sequence, read N- to C-terminus: Heavy metal-associated isoprenylated plant protein 32 (473 aa).

Positions 9-72 (IQTCVLKVNI…KLAKSGKHAE (64 aa)) constitute an HMA domain. Residues cysteine 20 and cysteine 23 each coordinate a metal cation. Disordered stretches follow at residues 96–139 (QIDH…KMGQ), 162–230 (KLPP…PNMT), and 246–343 (ANLA…QNMS). Gly residues predominate over residues 118–131 (KNGGGGGGGGGGGN). The span at 187-217 (PEDDDDDDFSDEFDDEFTDDDDDEFDDEFDD) shows a compositional bias: acidic residues. Gly residues predominate over residues 253–339 (AKNGGKGAPA…GFRPMGGGGP (87 aa)). Residue cysteine 470 is modified to Cysteine methyl ester. Cysteine 470 is lipidated: S-farnesyl cysteine. Residues 471 to 473 (DIM) constitute a propeptide, removed in mature form.

The protein belongs to the HIPP family.

Heavy-metal-binding protein. This is Heavy metal-associated isoprenylated plant protein 32 from Arabidopsis thaliana (Mouse-ear cress).